Reading from the N-terminus, the 296-residue chain is Diheme cytochrome c-type (296 aa).

C52, C55, H56, C202, C205, and H206 together coordinate heme c.

In terms of processing, binds 2 heme c groups covalently per subunit.

It localises to the cell membrane. Its function is as follows. Particularly expressed when cells generate energy via aerobic respiration. This chain is Diheme cytochrome c-type (cycG), found in Cereibacter sphaeroides (strain ATCC 17023 / DSM 158 / JCM 6121 / CCUG 31486 / LMG 2827 / NBRC 12203 / NCIMB 8253 / ATH 2.4.1.) (Rhodobacter sphaeroides).